Reading from the N-terminus, the 128-residue chain is Glycine cleavage system H protein (128 aa).

Residues 23-105 (IGIVGITWFA…YGEGWILKLE (83 aa)) form the Lipoyl-binding domain. The residue at position 64 (Lys64) is an N6-lipoyllysine.

It belongs to the GcvH family. The glycine cleavage system is composed of four proteins: P, T, L and H. (R)-lipoate is required as a cofactor.

Its function is as follows. The glycine cleavage system catalyzes the degradation of glycine. The H protein shuttles the methylamine group of glycine from the P protein to the T protein. The chain is Glycine cleavage system H protein from Symbiobacterium thermophilum (strain DSM 24528 / JCM 14929 / IAM 14863 / T).